A 119-amino-acid chain; its full sequence is MPRVKGGTVTRARRKKVLKLAKGYRGSKHRLFKVAKDQVMKGRQYAFRDRKATKRNFRKLWIARINAAARMNGLSYSKLMHGLKLANIDVNRKMLADLAVNDAAAFAALAEQAKTALAA.

It belongs to the bacterial ribosomal protein bL20 family.

Functionally, binds directly to 23S ribosomal RNA and is necessary for the in vitro assembly process of the 50S ribosomal subunit. It is not involved in the protein synthesizing functions of that subunit. The polypeptide is Large ribosomal subunit protein bL20 (Levilactobacillus brevis (strain ATCC 367 / BCRC 12310 / CIP 105137 / JCM 1170 / LMG 11437 / NCIMB 947 / NCTC 947) (Lactobacillus brevis)).